The primary structure comprises 710 residues: DNA ligase (710 aa).

Residues 1 to 26 (MPEDAIGQQVPPEQEAAGAEPTSAAR) are disordered. NAD(+) contacts are provided by residues 53–57 (DAEFD), 102–103 (SL), and glutamate 132. Lysine 134 serves as the catalytic N6-AMP-lysine intermediate. Residues arginine 155, glutamate 196, lysine 312, and lysine 336 each contribute to the NAD(+) site. Positions 430, 433, 449, and 455 each coordinate Zn(2+). The BRCT domain maps to 619 to 708 (EGPRPLEGMT…PDAAREVARV (90 aa)).

Belongs to the NAD-dependent DNA ligase family. LigA subfamily. Mg(2+) serves as cofactor. Requires Mn(2+) as cofactor.

It catalyses the reaction NAD(+) + (deoxyribonucleotide)n-3'-hydroxyl + 5'-phospho-(deoxyribonucleotide)m = (deoxyribonucleotide)n+m + AMP + beta-nicotinamide D-nucleotide.. Its function is as follows. DNA ligase that catalyzes the formation of phosphodiester linkages between 5'-phosphoryl and 3'-hydroxyl groups in double-stranded DNA using NAD as a coenzyme and as the energy source for the reaction. It is essential for DNA replication and repair of damaged DNA. This is DNA ligase from Salinispora arenicola (strain CNS-205).